The following is a 455-amino-acid chain: Single-stranded DNA-binding protein homolog sam-10 (455 aa).

Residues 19-51 (ARDRLTSYIYEYLQQTGASKTAETFKEEVLSTN) enclose the LisH domain. Disordered regions lie at residues 217–249 (PPPG…LNSP), 281–302 (SDHQ…TAGG), 314–343 (GPGS…HQPK), and 357–442 (EALT…NGEI). 2 stretches are compositionally biased toward low complexity: residues 288–298 (AGPAAAAPGAT) and 321–336 (VATT…SSIG). A compositionally biased stretch (polar residues) spans 396 to 406 (HSVNNNVNPGT). Low complexity predominate over residues 407–421 (PGSNPLSNPMSNPPL).

Ubiquitously expressed with higher expression in the head and tail ganglia, the vulva and PLM neurons.

It is found in the cytoplasm. It localises to the nucleus. Its function is as follows. Involved cell autonomously in PLM neuron pre-synaptic differentiation by negatively regulating prk-2 expression and in neurite branch positioning. The protein is Single-stranded DNA-binding protein homolog sam-10 of Caenorhabditis elegans.